Consider the following 311-residue polypeptide: tRNA-cytidine(32) 2-sulfurtransferase (311 aa).

Residues S47–S52 carry the PP-loop motif motif. Positions 122, 125, and 213 each coordinate [4Fe-4S] cluster.

This sequence belongs to the TtcA family. As to quaternary structure, homodimer. The cofactor is Mg(2+). Requires [4Fe-4S] cluster as cofactor.

The protein localises to the cytoplasm. The enzyme catalyses cytidine(32) in tRNA + S-sulfanyl-L-cysteinyl-[cysteine desulfurase] + AH2 + ATP = 2-thiocytidine(32) in tRNA + L-cysteinyl-[cysteine desulfurase] + A + AMP + diphosphate + H(+). The protein operates within tRNA modification. Functionally, catalyzes the ATP-dependent 2-thiolation of cytidine in position 32 of tRNA, to form 2-thiocytidine (s(2)C32). The sulfur atoms are provided by the cysteine/cysteine desulfurase (IscS) system. The polypeptide is tRNA-cytidine(32) 2-sulfurtransferase (Salmonella typhimurium (strain LT2 / SGSC1412 / ATCC 700720)).